We begin with the raw amino-acid sequence, 502 residues long: Maturase K (502 aa).

This sequence belongs to the intron maturase 2 family. MatK subfamily.

It localises to the plastid. The protein localises to the chloroplast. Usually encoded in the trnK tRNA gene intron. Probably assists in splicing its own and other chloroplast group II introns. In Vaccinium vitis-idaea (Mountain cranberry), this protein is Maturase K.